The sequence spans 191 residues: Large ribosomal subunit protein uL5 (191 aa).

Belongs to the universal ribosomal protein uL5 family. Part of the 50S ribosomal subunit; part of the 5S rRNA/L5/L18/L25 subcomplex. Contacts the 5S rRNA and the P site tRNA. Forms a bridge to the 30S subunit in the 70S ribosome.

Its function is as follows. This is one of the proteins that bind and probably mediate the attachment of the 5S RNA into the large ribosomal subunit, where it forms part of the central protuberance. In the 70S ribosome it contacts protein S13 of the 30S subunit (bridge B1b), connecting the 2 subunits; this bridge is implicated in subunit movement. Contacts the P site tRNA; the 5S rRNA and some of its associated proteins might help stabilize positioning of ribosome-bound tRNAs. The protein is Large ribosomal subunit protein uL5 of Micrococcus luteus (strain ATCC 4698 / DSM 20030 / JCM 1464 / CCM 169 / CCUG 5858 / IAM 1056 / NBRC 3333 / NCIMB 9278 / NCTC 2665 / VKM Ac-2230) (Micrococcus lysodeikticus).